A 502-amino-acid polypeptide reads, in one-letter code: MCGRRGGIWLALAAALLHVSLQGEFQRRLYKELVKNYNPLERPVANDSQPLTVYFSLSLLQIMDVDEKNQVLTTNIWLQMSWTDHYLQWNMSEYPGVKNVRFPDGQIWKPDILLYNSADERFDATFHTNVLVNASGHCQYLPPGIFKSSCYIDVRWFPFDVQQCKLKFGSWSYGGWSLDLQMQEADISSYIPNGEWDLMGIPGKRNEKFYECCKEPYPDVTYTVTMRRRTLYYGLNLLIPCVLISALALLVFLLPADSGEKISLGITVLLSLTVFMLLVAEIMPATSDSVPLIAQYFASTMIIVGLSVVVTVIVLRYHHHDPDGGKMPKWTRIILLNWCAWFLRMKRPGEDKVRPACQHKPRRCSLASVELSAGAGPPTSNGNLLYIGFRGLEGMHCAPTPDSGVVCGRLACSPTHDEHLMHGTHPSDGDPDLAKILEEVRYIANRFRCQDESEVICSEWKFAACVVDRLCLMAFSVFTIICTIGILMSAPNFVEAVSKDFA.

The first 22 residues, 1–22 (MCGRRGGIWLALAAALLHVSLQ), serve as a signal peptide directing secretion. The Extracellular segment spans residues 23 to 233 (GEFQRRLYKE…VTMRRRTLYY (211 aa)). Ca(2+)-binding residues include arginine 42 and valine 44. 3 N-linked (GlcNAc...) asparagine glycosylation sites follow: asparagine 46, asparagine 90, and asparagine 133. Cysteine 150 and cysteine 164 form a disulfide bridge. 2 residues coordinate Ca(2+): serine 172 and tyrosine 210. Cysteine 212 and cysteine 213 form a disulfide bridge. A run of 3 helical transmembrane segments spans residues 234-254 (GLNL…VFLL), 262-282 (ISLG…VAEI), and 295-315 (QYFA…VIVL). The interval 260–267 (EKISLGIT) is essential for TMEM35A/NACHO-mediated proper subunit assembly and trafficking to cell membrane. Residues 316-469 (RYHHHDPDGG…WKFAACVVDR (154 aa)) are Cytoplasmic-facing. The chain crosses the membrane as a helical span at residues 470-490 (LCLMAFSVFTIICTIGILMSA).

It belongs to the ligand-gated ion channel (TC 1.A.9) family. Acetylcholine receptor (TC 1.A.9.1) subfamily. Alpha-7/CHRNA7 sub-subfamily. Homopentamer. Can also form heteropentamers with CHRNB2, mainly found in basal forebrain cholinergic neurons. Interacts with RIC3; which is required for proper folding and assembly. Interacts with LYPD6. Interacts with CANX. Post-translationally, glycosylations at Asn-46, Asn-90 and Asn-133 are essential for TMEM35A/NACHO-mediated proper subunit assembly and trafficking to the cell membrane. Higly expressed in brain. ALso expressed in immune cells sucha as macrophages.

The protein localises to the postsynaptic cell membrane. It localises to the cell membrane. It carries out the reaction K(+)(in) = K(+)(out). The enzyme catalyses Na(+)(in) = Na(+)(out). The catalysed reaction is Ca(2+)(in) = Ca(2+)(out). It catalyses the reaction choline(out) = choline(in). It carries out the reaction NH4(+)(in) = NH4(+)(out). The enzyme catalyses L-arginine(in) = L-arginine(out). The catalysed reaction is guanidine(out) = guanidine(in). Its activity is regulated as follows. Activated by a myriad of ligands such as acetylcholine, cytisine, nicotine, choline and epibatidine. Oligomeric amyloid-beta protein 42 activates specifially CHRNA7:CHRNB2 nAchRs. Activity is modulated by positive allosteric modulators (PAMs), such as flavonoids, with a wide range of chemical diversity, pharmacological sensitivity and efficacy. AChR activity is inhibited by the antagonists alpha-conotoxons RgIA, ImI and ImII, small disulfide-constrained peptides from cone snails. Component of neuronal acetylcholine receptors (nAChRs) that function as pentameric, ligand-gated cation channels with high calcium permeability among other activities. nAChRs are excitatory neurotrasnmitter receptors formed by a collection of nAChR subunits known to mediate synaptic transmission in the nervous system and the neuromuscular junction. Each nAchR subunit confers differential attributes to channel properties, including activation, deactivation and desensitization kinetics, pH sensitivity, cation permeability, and binding to allosteric modulators. CHRNA7 forms homopentameric neuronal acetylcholine receptors abundantly expressed in the central nervous system, characterized by fast desensitization and high calcium permeability. Also forms heteropentamers with CHRNB2, mainly expressed in basal forebrain cholinergic neurons. Involved in the modulation of calcium-dependent signaling pathways and influences the release of neurotransmitters, including dopamine, glutamate and GABA. Involved in the modulation of calcium-dependent signaling pathways and influences the release of neurotransmitters, including dopamine, glutamate and GABA. Also expressed in non-neuronal cells such as immune cells like lymphocytes, monocytes and macrophages. In T cells, activation induces metabotropic signaling that results in an increase of intracellular Ca2+ concentrations, independent of ionotropic receptor functions. In macrophages, required for acetylcholine-mediated inhibition of TNF and other inflammatory cytokine release. Once activated by acetylcholine, nicotine or other agonists, selectively inhibits production of pro-inflammatory cytokines while leaving anti-inflammatory cytokines undisturbed. Stimulates the cholinergic anti-inflammatory pathway, controlling inflammation by inhibiting NFKB nuclear translocation and activating the JAK2-STAT3 pathway, independently of ion channel activity. Also expressed in the urothelium where it modulates reflex bladder activity by increasing intracellular calcium through internal stores and decreasing basal ATP release. The polypeptide is Neuronal acetylcholine receptor subunit alpha-7 (Chrna7) (Mus musculus (Mouse)).